The sequence spans 136 residues: Large ribosomal subunit protein bL19 (136 aa).

It belongs to the bacterial ribosomal protein bL19 family.

This protein is located at the 30S-50S ribosomal subunit interface and may play a role in the structure and function of the aminoacyl-tRNA binding site. This is Large ribosomal subunit protein bL19 from Xylella fastidiosa (strain 9a5c).